The following is a 271-amino-acid chain: Mannosyl-3-phosphoglycerate phosphatase (271 aa).

The Nucleophile role is filled by D13. Mg(2+)-binding residues include D13, D15, and D214.

It belongs to the HAD-like hydrolase superfamily. MPGP family. Mg(2+) is required as a cofactor.

It is found in the cytoplasm. It catalyses the reaction 2-O-(alpha-D-mannosyl)-3-phosphoglycerate + H2O = (2R)-2-O-(alpha-D-mannosyl)-glycerate + phosphate. The protein is Mannosyl-3-phosphoglycerate phosphatase (yedP) of Escherichia coli O6:K15:H31 (strain 536 / UPEC).